A 389-amino-acid chain; its full sequence is Sulfate adenylyltransferase (389 aa).

The protein belongs to the sulfate adenylyltransferase family.

The catalysed reaction is sulfate + ATP + H(+) = adenosine 5'-phosphosulfate + diphosphate. It functions in the pathway sulfur metabolism; hydrogen sulfide biosynthesis; sulfite from sulfate: step 1/3. This is Sulfate adenylyltransferase from Deinococcus geothermalis (strain DSM 11300 / CIP 105573 / AG-3a).